A 322-amino-acid chain; its full sequence is MELFPSQPDLYLKISRRREEEQEKESQELQEQEVERRLGFQSKASDLDNKSSNNLIHTLQFTSNNEATKINSNQEHKESLDQDLRSIFMMRPIRGIPLYQNQVLDHYYYSSTSPNPFFFSEVNGQHASRRLITNPNCSFNLHNRHRRQAQPQPPRFTAKRGVRAPRMRWTTTLHAHFVHAVQLLGGHERATPKSVLELMDVQDLTLAHVKSHLQMYRTIKSTEKPTTSSGQSDCENGSQVNSEREARNLTGLWNNSSSEARFQLKAKASSGVDISSNENEWKNRRCPSNERLSSDSSSLTGTRPETETPNLDFTLATPNLSP.

A disordered region spans residues 1–35 (MELFPSQPDLYLKISRRREEEQEKESQELQEQEVE). Residues 17-35 (RREEEQEKESQELQEQEVE) show a composition bias toward basic and acidic residues. In terms of domain architecture, HTH myb-type spans 161 to 221 (GVRAPRMRWT…HLQMYRTIKS (61 aa)). A DNA-binding region (H-T-H motif) is located at residues 192–217 (PKSVLELMDVQDLTLAHVKSHLQMYR). Disordered stretches follow at residues 222–244 (TEKP…NSER) and 267–322 (KASS…NLSP). Composition is skewed to polar residues over residues 224–241 (KPTT…SQVN) and 299–322 (LTGT…NLSP).

Expressed in developing phloem.

The protein localises to the nucleus. Functionally, probable transcription factor that regulates lateral organ polarity. Plays a role in lateral root formation and development. The sequence is that of Probable transcription factor KAN3 (KAN3) from Arabidopsis thaliana (Mouse-ear cress).